We begin with the raw amino-acid sequence, 97 residues long: Large ribosomal subunit protein uL23 (97 aa).

This sequence belongs to the universal ribosomal protein uL23 family. As to quaternary structure, part of the 50S ribosomal subunit. Contacts protein L29, and trigger factor when it is bound to the ribosome.

Its function is as follows. One of the early assembly proteins it binds 23S rRNA. One of the proteins that surrounds the polypeptide exit tunnel on the outside of the ribosome. Forms the main docking site for trigger factor binding to the ribosome. The polypeptide is Large ribosomal subunit protein uL23 (Rhizobium etli (strain CIAT 652)).